We begin with the raw amino-acid sequence, 538 residues long: Efflux pump radE (538 aa).

Basic and acidic residues-rich tracts occupy residues 1-12, 20-35, and 65-74; these read MATSRDFGREPP, EAGH…VSEH, and DPKEEERDPN. Disordered regions lie at residues 1-35 and 65-90; these read MATS…VSEH and DPKE…PQNW. 12 consecutive transmembrane segments (helical) span residues 100–120, 134–154, 163–183, 194–214, 225–245, 253–273, 327–347, 362–382, 409–429, 436–456, 482–502, and 505–525; these read AVLS…APGI, LATF…LVLA, VVIY…CALS, FLCG…IADL, SVWS…GGFL, WIFW…LLVL, PICL…YFMI, EGIV…GVVV, IPPT…YGWT, WAVP…INIS, IFGA…GLGW, and SLLA…FYYG.

It belongs to the major facilitator superfamily.

The protein localises to the cell membrane. Functionally, efflux pump that might be required for efficient secretion of radicicol or other secondary metabolies produced by the radicicol gene cluster. This Floropilus chiversii (Chaetomium chiversii) protein is Efflux pump radE.